The following is a 438-amino-acid chain: Trigger factor (438 aa).

Residues 162–247 (GDRVNINYQG…LNKVEAPKLP (86 aa)) enclose the PPIase FKBP-type domain.

The protein belongs to the FKBP-type PPIase family. Tig subfamily.

The protein resides in the cytoplasm. The catalysed reaction is [protein]-peptidylproline (omega=180) = [protein]-peptidylproline (omega=0). Involved in protein export. Acts as a chaperone by maintaining the newly synthesized protein in an open conformation. Functions as a peptidyl-prolyl cis-trans isomerase. This Nitrosomonas eutropha (strain DSM 101675 / C91 / Nm57) protein is Trigger factor.